The primary structure comprises 75 residues: Exodeoxyribonuclease 7 small subunit (75 aa).

Belongs to the XseB family. Heterooligomer composed of large and small subunits.

It is found in the cytoplasm. The enzyme catalyses Exonucleolytic cleavage in either 5'- to 3'- or 3'- to 5'-direction to yield nucleoside 5'-phosphates.. Functionally, bidirectionally degrades single-stranded DNA into large acid-insoluble oligonucleotides, which are then degraded further into small acid-soluble oligonucleotides. The sequence is that of Exodeoxyribonuclease 7 small subunit from Listeria welshimeri serovar 6b (strain ATCC 35897 / DSM 20650 / CCUG 15529 / CIP 8149 / NCTC 11857 / SLCC 5334 / V8).